The primary structure comprises 524 residues: Solute carrier family 35 member F5 (524 aa).

The next 2 membrane-spanning stretches (helical) occupy residues 69–89 (MALG…SSEL) and 101–121 (FFST…FIIW). The residue at position 207 (S207) is a Phosphoserine. The next 8 membrane-spanning stretches (helical) occupy residues 244–264 (ISFF…EALS), 269–289 (AIVN…AAVF), 297–317 (FTLS…LVNL), 328–348 (TIGS…IVMI), 362–382 (MFFG…FFLL), 396–416 (VVLL…EFLW), 421–441 (FLTS…LSII), and 453–473 (WLFF…TLLC). In terms of domain architecture, EamA spans 253–317 (FLANLSYQEA…SIGGVVLVNL (65 aa)).

The protein belongs to the SLC35F solute transporter family.

It is found in the membrane. In terms of biological role, putative solute transporter. The polypeptide is Solute carrier family 35 member F5 (Slc35f5) (Mus musculus (Mouse)).